Consider the following 562-residue polypeptide: NAD-dependent malic enzyme (562 aa).

Tyr-101 functions as the Proton donor in the catalytic mechanism. Arg-154 provides a ligand contact to NAD(+). Lys-172 acts as the Proton acceptor in catalysis. A divalent metal cation contacts are provided by Glu-243, Asp-244, and Asp-267. Asp-267 and Asn-415 together coordinate NAD(+).

It belongs to the malic enzymes family. As to quaternary structure, homotetramer. Mg(2+) is required as a cofactor. Mn(2+) serves as cofactor.

It catalyses the reaction (S)-malate + NAD(+) = pyruvate + CO2 + NADH. The catalysed reaction is oxaloacetate + H(+) = pyruvate + CO2. The chain is NAD-dependent malic enzyme from Colwellia psychrerythraea (strain 34H / ATCC BAA-681) (Vibrio psychroerythus).